The chain runs to 1273 residues: DNA polymerase 037L (1273 aa).

The stretch at 679 to 837 (IRKNAITEEL…ENKSKEDIDE (159 aa)) forms a coiled coil.

The protein belongs to the DNA polymerase type-B family.

The enzyme catalyses DNA(n) + a 2'-deoxyribonucleoside 5'-triphosphate = DNA(n+1) + diphosphate. DNA-directed DNA polymerase involved in viral DNA replication. This Invertebrate iridescent virus 6 (IIV-6) protein is DNA polymerase 037L (DPOL).